The chain runs to 178 residues: MLEGIVRESIGRKAAKALKRDGYLIANIYGKGLENINAAFKVNEFIKEVRKKTTLIFDVKVGSQTLSVVVVDYQKDSVTAELKHVDLKVAQKGVISKYMVPVKITGTAIGLKNKGVLIQSKRRLKVKCAAENLPNFFELDVSKLDVGDALLVRDIVVPAGVTMIDADRVAVVGVEKAR.

The protein belongs to the bacterial ribosomal protein bL25 family. CTC subfamily. As to quaternary structure, part of the 50S ribosomal subunit; part of the 5S rRNA/L5/L18/L25 subcomplex. Contacts the 5S rRNA. Binds to the 5S rRNA independently of L5 and L18.

Functionally, this is one of the proteins that binds to the 5S RNA in the ribosome where it forms part of the central protuberance. This chain is Large ribosomal subunit protein bL25, found in Campylobacter jejuni subsp. jejuni serotype O:23/36 (strain 81-176).